Consider the following 290-residue polypeptide: Arylamine N-acetyltransferase 1 (290 aa).

N-acetylmethionine is present on Met-1. Residue Cys-68 is the Acyl-thioester intermediate of the active site. 2 residues coordinate CoA: Thr-103 and Gly-104. 106–107 (IH) is a substrate binding site. Catalysis depends on residues His-107 and Asp-122. Residues Tyr-208 and Ser-214 each contribute to the CoA site.

Belongs to the arylamine N-acetyltransferase family.

The protein resides in the cytoplasm. The enzyme catalyses an arylamine + acetyl-CoA = an N-acetylarylamine + CoA. The polypeptide is Arylamine N-acetyltransferase 1 (NAT1) (Oryctolagus cuniculus (Rabbit)).